The primary structure comprises 486 residues: Palmitoyltransferase pfa5 (486 aa).

A run of 2 helical transmembrane segments spans residues 12–32 (AVAR…CYVI) and 54–74 (VGAG…VIIT). The tract at residues 94-130 (AADQQSTPAKRSKSRSRRKGHGHGHRKSKSDEVSDKP) is disordered. The span at 103 to 121 (KRSKSRSRRKGHGHGHRKS) shows a compositional bias: basic residues. Positions 172–222 (IYCSKCCHYKPDRTHHCREVDRCVRKMDHFCPWVGGVVSETSFKFFIQFVF) constitute a DHHC domain. 2 helical membrane-spanning segments follow: residues 217 to 237 (FIQF…VCAI) and 261 to 281 (LVML…FNLT). Disordered stretches follow at residues 326–357 (PVPP…STDP) and 433–486 (KDAA…TGTT). Residues 447–456 (SSYNSSPSAP) are compositionally biased toward low complexity. Basic residues predominate over residues 460–480 (RSKRKQKRGKHHHHHHHHRHS).

The protein belongs to the DHHC palmitoyltransferase family. PFA5 subfamily. Post-translationally, autopalmitoylated.

It localises to the membrane. The catalysed reaction is L-cysteinyl-[protein] + hexadecanoyl-CoA = S-hexadecanoyl-L-cysteinyl-[protein] + CoA. The polypeptide is Palmitoyltransferase pfa5 (pfa5) (Emericella nidulans (strain FGSC A4 / ATCC 38163 / CBS 112.46 / NRRL 194 / M139) (Aspergillus nidulans)).